A 249-amino-acid chain; its full sequence is ATP synthase subunit a (249 aa).

6 consecutive transmembrane segments (helical) span residues 30–50 (QSPV…YVGM), 86–106 (FFPF…LGLL), 115–135 (HIAV…IVSL), 142–162 (FFAH…LVPI), 191–211 (MFAA…VLAV), and 218–238 (VALM…FAIL).

This sequence belongs to the ATPase A chain family. F-type ATPases have 2 components, CF(1) - the catalytic core - and CF(0) - the membrane proton channel. CF(1) has five subunits: alpha(3), beta(3), gamma(1), delta(1), epsilon(1). CF(0) has three main subunits: a(1), b(2) and c(9-12). The alpha and beta chains form an alternating ring which encloses part of the gamma chain. CF(1) is attached to CF(0) by a central stalk formed by the gamma and epsilon chains, while a peripheral stalk is formed by the delta and b chains.

The protein resides in the cell inner membrane. In terms of biological role, key component of the proton channel; it plays a direct role in the translocation of protons across the membrane. The polypeptide is ATP synthase subunit a (Gluconacetobacter diazotrophicus (strain ATCC 49037 / DSM 5601 / CCUG 37298 / CIP 103539 / LMG 7603 / PAl5)).